Here is a 256-residue protein sequence, read N- to C-terminus: Adenosylcobinamide-GDP ribazoletransferase (256 aa).

A run of 6 helical transmembrane segments spans residues Y40 to L60, P64 to F84, I114 to S134, I143 to L163, V194 to L214, and C234 to M254.

The protein belongs to the CobS family. The cofactor is Mg(2+).

The protein localises to the cell inner membrane. The catalysed reaction is alpha-ribazole + adenosylcob(III)inamide-GDP = adenosylcob(III)alamin + GMP + H(+). It carries out the reaction alpha-ribazole 5'-phosphate + adenosylcob(III)inamide-GDP = adenosylcob(III)alamin 5'-phosphate + GMP + H(+). Its pathway is cofactor biosynthesis; adenosylcobalamin biosynthesis; adenosylcobalamin from cob(II)yrinate a,c-diamide: step 7/7. Its function is as follows. Joins adenosylcobinamide-GDP and alpha-ribazole to generate adenosylcobalamin (Ado-cobalamin). Also synthesizes adenosylcobalamin 5'-phosphate from adenosylcobinamide-GDP and alpha-ribazole 5'-phosphate. The polypeptide is Adenosylcobinamide-GDP ribazoletransferase (Ralstonia pickettii (strain 12J)).